A 171-amino-acid chain; its full sequence is S-ribosylhomocysteine lyase (171 aa).

The Fe cation site is built by His54, His58, and Cys128.

The protein belongs to the LuxS family. Homodimer. Fe cation serves as cofactor.

It catalyses the reaction S-(5-deoxy-D-ribos-5-yl)-L-homocysteine = (S)-4,5-dihydroxypentane-2,3-dione + L-homocysteine. Functionally, involved in the synthesis of autoinducer 2 (AI-2) which is secreted by bacteria and is used to communicate both the cell density and the metabolic potential of the environment. The regulation of gene expression in response to changes in cell density is called quorum sensing. Catalyzes the transformation of S-ribosylhomocysteine (RHC) to homocysteine (HC) and 4,5-dihydroxy-2,3-pentadione (DPD). This chain is S-ribosylhomocysteine lyase, found in Campylobacter curvus (strain 525.92).